The following is a 375-amino-acid chain: uncharacterized protein (375 aa).

The 250-residue stretch at 52 to 301 (VLLSAHRGSW…KQGFATYHES (250 aa)) folds into the GP-PDE domain.

This is an uncharacterized protein from Sinorhizobium fredii (strain NBRC 101917 / NGR234).